The sequence spans 129 residues: Urease subunit beta (129 aa).

This sequence belongs to the urease beta subunit family. As to quaternary structure, heterotrimer of UreA (gamma), UreB (beta) and UreC (alpha) subunits. Three heterotrimers associate to form the active enzyme.

Its subcellular location is the cytoplasm. The enzyme catalyses urea + 2 H2O + H(+) = hydrogencarbonate + 2 NH4(+). It functions in the pathway nitrogen metabolism; urea degradation; CO(2) and NH(3) from urea (urease route): step 1/1. In Photorhabdus laumondii subsp. laumondii (strain DSM 15139 / CIP 105565 / TT01) (Photorhabdus luminescens subsp. laumondii), this protein is Urease subunit beta.